Reading from the N-terminus, the 376-residue chain is Phosphate acyltransferase (376 aa).

Residues 334–376 form a disordered region; it reads AGSLEQAKRDAGGPGSASQMASPIAGPVSGQPAEPYSAQSSKA.

It belongs to the PlsX family. In terms of assembly, homodimer. Probably interacts with PlsY.

It is found in the cytoplasm. The catalysed reaction is a fatty acyl-[ACP] + phosphate = an acyl phosphate + holo-[ACP]. Its pathway is lipid metabolism; phospholipid metabolism. Functionally, catalyzes the reversible formation of acyl-phosphate (acyl-PO(4)) from acyl-[acyl-carrier-protein] (acyl-ACP). This enzyme utilizes acyl-ACP as fatty acyl donor, but not acyl-CoA. This chain is Phosphate acyltransferase, found in Paraburkholderia phymatum (strain DSM 17167 / CIP 108236 / LMG 21445 / STM815) (Burkholderia phymatum).